Consider the following 183-residue polypeptide: GTP cyclohydrolase 1 (183 aa).

Positions 71, 74, and 142 each coordinate Zn(2+).

It belongs to the GTP cyclohydrolase I family. As to quaternary structure, toroid-shaped homodecamer, composed of two pentamers of five dimers.

The catalysed reaction is GTP + H2O = 7,8-dihydroneopterin 3'-triphosphate + formate + H(+). It functions in the pathway cofactor biosynthesis; 7,8-dihydroneopterin triphosphate biosynthesis; 7,8-dihydroneopterin triphosphate from GTP: step 1/1. The protein is GTP cyclohydrolase 1 of Leptospira borgpetersenii serovar Hardjo-bovis (strain JB197).